The primary structure comprises 811 residues: MPRCFQLPCSTRMPTTEVPQAADGQGDAGDGEEAAEPEGKFKPPKNTKRKNRDYVRFTPLLLVLAALVSAGVMLWYFLGYKAEVTVSQVYSGSLRVLNRHFSQDLGRRESIAFRSESAKAQKMLQELVASTRLGTYYNSSSVYSFGEGPLTCFFWFILDIPEYQRLTLSPEVVRELLVDELLSNSSTLASYKTEYEVDPEGLVILEASVNDIVVLNSTLGCYRYSYVNPGQVLPLKGPDQQTTSCLWHLQGPEDLMIKVRLEWTRVDCRDRVAMYDAAGPLEKRLITSVYGCSRQEPVMEVLASGSVMAVVWKKGMHSYYDPFLLSVKSVAFQDCQVNLTLEGRLDTQGFLRTPYYPSYYSPSTHCSWHLTVPSLDYGLALWFDAYALRRQKYNRLCTQGQWMIQNRRLCGFRTLQPYAERIPMVASDGVTINFTSQISLTGPGVQVYYSLYNQSDPCPGEFLCSVNGLCVPACDGIKDCPNGLDERNCVCRAMFQCQEDSTCISLPRVCDRQPDCLNGSDEEQCQEGVPCGTFTFQCEDRSCVKKPNPECDGQSDCRDGSDEQHCDCGLQGLSSRIVGGTVSSEGEWPWQASLQIRGRHICGGALIADRWVITAAHCFQEDSMASPKLWTVFLGKMRQNSRWPGEVSFKVSRLFLHPYHEEDSHDYDVALLQLDHPVVYSATVRPVCLPARSHFFEPGQHCWITGWGAQREGGPVSNTLQKVDVQLVPQDLCSEAYRYQVSPRMLCAGYRKGKKDACQGDSGGPLVCREPSGRWFLAGLVSWGLGCGRPNFFGVYTRVTRVINWIQQVLT.

Residues 1–48 (MPRCFQLPCSTRMPTTEVPQAADGQGDAGDGEEAAEPEGKFKPPKNTK) are disordered. Topologically, residues 1–59 (MPRCFQLPCSTRMPTTEVPQAADGQGDAGDGEEAAEPEGKFKPPKNTKRKNRDYVRFTP) are cytoplasmic. The segment covering 8–18 (PCSTRMPTTEV) has biased composition (polar residues). A helical; Signal-anchor for type II membrane protein membrane pass occupies residues 60–80 (LLLVLAALVSAGVMLWYFLGY). Residues 81-811 (KAEVTVSQVY…VINWIQQVLT (731 aa)) lie on the Extracellular side of the membrane. The 124-residue stretch at 86–209 (VSQVYSGSLR…EGLVILEASV (124 aa)) folds into the SEA domain. Residues Asn-138, Asn-184, Asn-216, Asn-338, Asn-433, and Asn-453 are each glycosylated (N-linked (GlcNAc...) asparagine). 2 CUB domains span residues 213–336 (VVLN…QDCQ) and 323–440 (FLLS…QISL). A disulfide bridge links Cys-335 with Cys-366. 3 consecutive LDL-receptor class A domains span residues 445 to 477 (VQVY…CDGI), 478 to 514 (KDCP…DRQP), and 518 to 555 (NGSD…DGQS). 10 cysteine pairs are disulfide-bonded: Cys-458–Cys-470, Cys-464–Cys-480, Cys-474–Cys-489, Cys-491–Cys-503, Cys-497–Cys-516, Cys-510–Cys-525, Cys-531–Cys-543, Cys-538–Cys-557, Cys-551–Cys-566, and Cys-602–Cys-618. Asn-518 is a glycosylation site (N-linked (GlcNAc...) asparagine). One can recognise a Peptidase S1 domain in the interval 577 to 811 (IVGGTVSSEG…VINWIQQVLT (235 aa)). Active-site charge relay system residues include His-617 and Asp-668. Intrachain disulfides connect Cys-702-Cys-768, Cys-733-Cys-747, and Cys-758-Cys-787. The Charge relay system role is filled by Ser-762.

This sequence belongs to the peptidase S1 family. As to quaternary structure, interacts with HJV. Post-translationally, the single-chain zymogen undergoes autoproteolytic processing. This results in TMPRSS6 shedding from the cell surface and conversion into an activated two-chains form which is released extracellularly. The process involves a trans-activation mechanism that requires TMPRSS6 oligomerization. As to expression, expressed at highest levels in adult mice liver, kidney and uterus. Also strongly expressed within the nasal cavity by olfactory epithelial cells. A weak, but detectable, signal in adult mice tissues analyzed including brain, lung, heart, kidney, spleen, muscle, intestine, thymus and pancreas. No signal in residual embryonic yolk sac, developing kidney tubules or in embryonic tissues analyzed including lung, heart, gastrointestinal tract and epithelium of the oral cavity.

It is found in the cell membrane. Its function is as follows. Membrane-bound serine protease. Through the cleavage of cell surface HJV, a regulator of the expression of the iron absorption-regulating hormone hepicidin/HAMP, plays a role in iron homeostasis. The chain is Transmembrane protease serine 6 (Tmprss6) from Mus musculus (Mouse).